A 79-amino-acid polypeptide reads, in one-letter code: Conotoxin Leo-O4 (79 aa).

A signal peptide spans 1-22 (MKLTCMMLVAVLFLTAWTFVTA). Positions 23–51 (NVSRNGLENLFPEERHEMMNPNAAKLNNR) are excised as a propeptide. 3 disulfides stabilise this stretch: Cys-53/Cys-70, Cys-60/Cys-74, and Cys-69/Cys-78.

The protein belongs to the conotoxin O1 superfamily. As to expression, expressed by the venom duct.

The protein resides in the secreted. This is Conotoxin Leo-O4 from Conus leopardus (Leopard cone).